Reading from the N-terminus, the 64-residue chain is Large ribosomal subunit protein uL29 (64 aa).

The protein belongs to the universal ribosomal protein uL29 family.

The chain is Large ribosomal subunit protein uL29 from Maridesulfovibrio salexigens (strain ATCC 14822 / DSM 2638 / NCIMB 8403 / VKM B-1763) (Desulfovibrio salexigens).